Here is a 150-residue protein sequence, read N- to C-terminus: Small ribosomal subunit protein uS15 (150 aa).

The interval 1-22 (MNKRREKGQSHSTRPPHPQPPQ) is disordered.

The protein belongs to the universal ribosomal protein uS15 family. As to quaternary structure, part of the 30S ribosomal subunit.

The sequence is that of Small ribosomal subunit protein uS15 from Aeropyrum pernix (strain ATCC 700893 / DSM 11879 / JCM 9820 / NBRC 100138 / K1).